Consider the following 4760-residue polypeptide: Nonribosomal peptide synthetase cm3A (4760 aa).

Residues 1-12 (MKHLASSENMPT) are compositionally biased toward polar residues. Residues 1-24 (MKHLASSENMPTPAQDRAPSPSAM) form a disordered region. One can recognise a Carrier 1 domain in the interval 19–95 (PSPSAMQQEI…ELSRSAECQL (77 aa)). Ser-56 is modified (O-(pantetheine 4'-phosphoryl)serine). 2 condensation regions span residues 142–570 (QDIF…EIEQ) and 178–571 (PGLS…IEQL). The adenylation 1 stretch occupies residues 591 to 984 (DEQARLCPDA…GRRDTQVKLR (394 aa)). The region spanning 1120 to 1197 (REATTLQLQI…KLTEKLGVPE (78 aa)) is the Carrier 2 domain. Position 1158 is an O-(pantetheine 4'-phosphoryl)serine (Ser-1158). Condensation regions lie at residues 1210–1654 (FPLS…KTPS) and 1689–2125 (VEDM…NVTT). Residues 2171 to 2551 (DGDLTYFELD…DRKDWQIKIR (381 aa)) form an adenylation 2 region. Residues 2684-2762 (LPSSETEKTV…ELAHAIDQRS (79 aa)) enclose the Carrier 3 domain. Ser-2721 is subject to O-(pantetheine 4'-phosphoryl)serine. A condensation 4 region spans residues 2811–3203 (VEDIYPCTPL…RFKHIFGQLS (393 aa)). The interval 3255–3647 (SATTPDRPAV…GRADQQLKIR (393 aa)) is adenylation 3. Positions 3783-3857 (TRTEELMQSV…QLAQRATTDA (75 aa)) constitute a Carrier 4 domain. Condensation regions lie at residues 3869 to 4296 (EFRL…TLLC) and 4340 to 4757 (EDIY…EEMG).

The protein belongs to the nrps family.

The protein operates within secondary metabolite biosynthesis. Its function is as follows. Nonribosomal peptide synthetase; part of the gene cluster that mediates the biosynthesis of beauveriolides I and III, cyclodepsipeptides acting as inhibitors of the acyl-CoA:cholesterol acyltransferase. The HR-PKS cm3B initiates the biosynthesis of beauveriolides by iteratively catalyzing the formation of the linear polyketide chain. The ATP-dependent acetyl-CoA ligase cm3D converts the polyketide carboxylic acid to a CoA thioester which id shuttled to the first T domain in the NRPS cm3A by the acetyltransferase cm3C. Cm3A contains 13 domains and assembles the polyketide chain, L-phenylalanine, L-alanine, and D-leucine (or D-allo-isoleucine) to form beauveriolide I (or beauveriolide III). The production of both beauveriolides I and III suggests the substrate adaptability of cm3B, using different amino acids as substrates. The sequence is that of Nonribosomal peptide synthetase cm3A from Cordyceps militaris (strain CM01) (Caterpillar fungus).